Consider the following 137-residue polypeptide: Probable glycine cleavage system H protein 1 (137 aa).

Residues 31–113 (VAVIGITDYA…YGEGWIFKLK (83 aa)) enclose the Lipoyl-binding domain. Lys72 carries the post-translational modification N6-lipoyllysine.

This sequence belongs to the GcvH family. The glycine cleavage system is composed of four proteins: P, T, L and H. It depends on (R)-lipoate as a cofactor.

Functionally, the glycine cleavage system catalyzes the degradation of glycine. The H protein shuttles the methylamine group of glycine from the P protein to the T protein. The protein is Probable glycine cleavage system H protein 1 of Saccharolobus solfataricus (strain ATCC 35092 / DSM 1617 / JCM 11322 / P2) (Sulfolobus solfataricus).